The following is an 89-amino-acid chain: Small ribosomal subunit protein uS15 (89 aa).

Positions 1–10 (MSITAEKKQE) are enriched in basic and acidic residues. The segment at 1–24 (MSITAEKKQEVIQSNARAEGDTGS) is disordered.

Belongs to the universal ribosomal protein uS15 family. Part of the 30S ribosomal subunit. Forms a bridge to the 50S subunit in the 70S ribosome, contacting the 23S rRNA.

Functionally, one of the primary rRNA binding proteins, it binds directly to 16S rRNA where it helps nucleate assembly of the platform of the 30S subunit by binding and bridging several RNA helices of the 16S rRNA. In terms of biological role, forms an intersubunit bridge (bridge B4) with the 23S rRNA of the 50S subunit in the ribosome. This is Small ribosomal subunit protein uS15 from Novosphingobium aromaticivorans (strain ATCC 700278 / DSM 12444 / CCUG 56034 / CIP 105152 / NBRC 16084 / F199).